The sequence spans 136 residues: Large-conductance mechanosensitive channel (136 aa).

Transmembrane regions (helical) follow at residues alanine 9 to phenylalanine 29 and isoleucine 79 to isoleucine 99.

It belongs to the MscL family. In terms of assembly, homopentamer.

The protein resides in the cell inner membrane. Channel that opens in response to stretch forces in the membrane lipid bilayer. May participate in the regulation of osmotic pressure changes within the cell. The chain is Large-conductance mechanosensitive channel from Shewanella sp. (strain MR-4).